Consider the following 871-residue polypeptide: Probable receptor-like protein kinase At2g21480 (871 aa).

The signal sequence occupies residues 1–39 (MEIRKKPNIPMCLVLDSSSRPFMTLLFTILLFLTGLASA). At 40–439 (VGAVGGSPTA…GQRASMGKQG (400 aa)) the chain is on the extracellular side. 5 N-linked (GlcNAc...) asparagine glycosylation sites follow: Asn-169, Asn-182, Asn-253, Asn-316, and Asn-381. A helical membrane pass occupies residues 440-460 (MVATAGFVMMFGAFVGLGAMV). Residues 461–871 (YKWKKRPQDW…FTQFASLNGR (411 aa)) are Cytoplasmic-facing. One can recognise a Protein kinase domain in the interval 525–797 (FDASEIIGVG…GDVLWNLEYA (273 aa)). ATP contacts are provided by residues 531–539 (IGVGGFGNV) and Lys-553. The active-site Proton acceptor is Asp-649. A disordered region spans residues 808–871 (KAEAEEVETP…FTQFASLNGR (64 aa)). The span at 817–839 (PKPVAVPAAAPTSPAATTAAASE) shows a compositional bias: low complexity. Over residues 854–871 (DQHSGTTMFTQFASLNGR) the composition is skewed to polar residues.

The protein belongs to the protein kinase superfamily. Ser/Thr protein kinase family.

Its subcellular location is the membrane. The protein is Probable receptor-like protein kinase At2g21480 of Arabidopsis thaliana (Mouse-ear cress).